The sequence spans 116 residues: Large ribosomal subunit protein bL19 (116 aa).

Belongs to the bacterial ribosomal protein bL19 family.

This protein is located at the 30S-50S ribosomal subunit interface and may play a role in the structure and function of the aminoacyl-tRNA binding site. In Shewanella loihica (strain ATCC BAA-1088 / PV-4), this protein is Large ribosomal subunit protein bL19.